A 268-amino-acid polypeptide reads, in one-letter code: Phosphoethanolamine/phosphocholine phosphatase (268 aa).

The Nucleophile role is filled by Asp-32. Mg(2+)-binding residues include Asp-32 and Asp-34. Catalysis depends on Asp-34, which acts as the Proton donor. Residues Asp-43 and Asp-123 each contribute to the substrate site. Mg(2+) is bound at residue Asp-203.

The protein belongs to the HAD-like hydrolase superfamily. PHOSPHO family. The cofactor is Mg(2+). In terms of tissue distribution, expressed at sites of mineralization in bone and cartilage. Highly expressed in hypertrophic chondrocytes compared to non-chondrogenic tissues. Expressed in chondrocytes but not in heart, liver, lung, kidney, spleen, muscle, adipose tissues not duodenum. In diaphyseal cortical bone, it is expressed in the osteoid layer of the periosteum, forming surfaces of growing osteons, and newly formed osteocytes, whereas it is not expressed in the endosteum and closed osteons. In growth plate cartilage, it is limited to the early hypertrophic chondrocytes and the ossification groove of Ranvier. Highly expressed on the mineralization surfaces of the cartilage remnants and trabecular bone within the primary spongiosa. Expressed in 17-day-old embryonic calvaria, the osteoid present on the intramembranous and periosteal bone surfaces but not in soft tissues examined.

It is found in the extracellular vesicle. It catalyses the reaction phosphoethanolamine + H2O = ethanolamine + phosphate. It carries out the reaction phosphocholine + H2O = choline + phosphate. Phosphatase that has a high activity toward phosphoethanolamine (PEA) and phosphocholine (PCho). Involved in the generation of inorganic phosphate for bone mineralization. This chain is Phosphoethanolamine/phosphocholine phosphatase (PHOSPHO1), found in Gallus gallus (Chicken).